Here is a 178-residue protein sequence, read N- to C-terminus: MVAVPTAWCSVALALLLALQEGKGQVAAAPDHPAPSPRARGSHLRPRRCSCSSWLDKECVYFCHLDIIWVNTPGQTAPYGLGNPPRRRRRSLPKRCECSSSGDPACATFCHRRPWAEAVVVPGSRSPADVFQAGQRWTSAGELLQQLREISATKIRFARQHQEAEREPRPMYPRRRKT.

The N-terminal stretch at 1–24 (MVAVPTAWCSVALALLLALQEGKG) is a signal peptide. A propeptide spanning residues 25-46 (QVAAAPDHPAPSPRARGSHLRP) is cleaved from the precursor. 2 cysteine pairs are disulfide-bonded: Cys-49/Cys-63 and Cys-51/Cys-59. Positions 70 to 178 (VNTPGQTAPY…RPMYPRRRKT (109 aa)) are excised as a propeptide. Positions 96-111 (CECSSSGDPACATFCH) are endothelin-like. Positions 158–178 (ARQHQEAEREPRPMYPRRRKT) are disordered. The segment covering 160-169 (QHQEAEREPR) has biased composition (basic and acidic residues).

Belongs to the endothelin/sarafotoxin family.

It localises to the secreted. Functionally, endothelins are endothelium-derived vasoconstrictor peptides. The polypeptide is Endothelin-2 (EDN2) (Mustela putorius furo (European domestic ferret)).